Reading from the N-terminus, the 434-residue chain is Eukaryotic translation initiation factor 3 subunit E (434 aa).

Residues Phe-219–Leu-392 form the PCI domain.

This sequence belongs to the eIF-3 subunit E family. In terms of assembly, component of the eukaryotic translation initiation factor 3 (eIF-3) complex. The eIF-3 complex interacts with pix. Interacts with mxt.

It is found in the cytoplasm. Component of the eukaryotic translation initiation factor 3 (eIF-3) complex, which is involved in protein synthesis of a specialized repertoire of mRNAs and, together with other initiation factors, stimulates binding of mRNA and methionyl-tRNAi to the 40S ribosome. The eIF-3 complex specifically targets and initiates translation of a subset of mRNAs involved in cell proliferation. The sequence is that of Eukaryotic translation initiation factor 3 subunit E (eIF3-S6) from Drosophila persimilis (Fruit fly).